Consider the following 453-residue polypeptide: Homogentisate 1,2-dioxygenase (453 aa).

A compositionally biased stretch (basic and acidic residues) spans 1-12 (MLEKAERQRKAA). A disordered region spans residues 1-43 (MLEKAERQRKAAPDQQRSAGYMPGFGNDFETESLPGSLPQGQN). The active-site Proton acceptor is H306. Positions 349 and 355 each coordinate Fe cation. Residues Y364 and H385 each coordinate homogentisate. H385 serves as a coordination point for Fe cation.

The protein belongs to the homogentisate dioxygenase family. In terms of assembly, hexamer; dimer of trimers. Requires Fe cation as cofactor.

It carries out the reaction homogentisate + O2 = 4-maleylacetoacetate + H(+). Its pathway is amino-acid degradation; L-phenylalanine degradation; acetoacetate and fumarate from L-phenylalanine: step 4/6. Involved in the catabolism of homogentisate (2,5-dihydroxyphenylacetate or 2,5-OH-PhAc), a central intermediate in the degradation of phenylalanine and tyrosine. Catalyzes the oxidative ring cleavage of the aromatic ring of homogentisate to yield maleylacetoacetate. In Sinorhizobium medicae (strain WSM419) (Ensifer medicae), this protein is Homogentisate 1,2-dioxygenase.